We begin with the raw amino-acid sequence, 335 residues long: Flagellar P-ring protein (335 aa).

Residues 1 to 24 (MNKITNFLILSAVLFFSLIESANA) form the signal peptide.

It belongs to the FlgI family. In terms of assembly, the basal body constitutes a major portion of the flagellar organelle and consists of four rings (L,P,S, and M) mounted on a central rod.

The protein resides in the periplasm. It localises to the bacterial flagellum basal body. In terms of biological role, assembles around the rod to form the L-ring and probably protects the motor/basal body from shearing forces during rotation. This chain is Flagellar P-ring protein, found in Bdellovibrio bacteriovorus (strain ATCC 15356 / DSM 50701 / NCIMB 9529 / HD100).